The primary structure comprises 382 residues: Low-specificity L-threonine aldolase (382 aa).

Lysine 214 is modified (N6-(pyridoxal phosphate)lysine).

The protein belongs to the threonine aldolase family. In terms of assembly, homotetramer. It depends on pyridoxal 5'-phosphate as a cofactor.

It catalyses the reaction L-threonine = acetaldehyde + glycine. The enzyme catalyses L-allo-threonine = acetaldehyde + glycine. The protein operates within amino-acid degradation; L-threonine degradation via aldolase pathway; acetaldehyde and glycine from L-threonine: step 1/1. The sequence is that of Low-specificity L-threonine aldolase (GLY1) from Eremothecium gossypii (strain ATCC 10895 / CBS 109.51 / FGSC 9923 / NRRL Y-1056) (Yeast).